A 133-amino-acid polypeptide reads, in one-letter code: Small ribosomal subunit protein uS8 (133 aa).

This sequence belongs to the universal ribosomal protein uS8 family. Part of the 30S ribosomal subunit. Contacts proteins S5 and S12.

In terms of biological role, one of the primary rRNA binding proteins, it binds directly to 16S rRNA central domain where it helps coordinate assembly of the platform of the 30S subunit. The chain is Small ribosomal subunit protein uS8 from Mycoplasma mobile (strain ATCC 43663 / 163K / NCTC 11711) (Mesomycoplasma mobile).